The sequence spans 512 residues: Endo-1,4-beta-xylanase A (512 aa).

An N-terminal signal peptide occupies residues 1–30 (MKRKVKKMAAMATSIIMAIMIILHSIPVLA). Residues 33–228 (IIYDNETGTH…SSGYANVYKN (196 aa)) form the GH11 domain. Glu-124 (nucleophile) is an active-site residue. Catalysis depends on Glu-215, which acts as the Proton donor. 2 consecutive CBM6 domains span residues 251–371 (SIIE…FIFS) and 388–508 (SIIQ…FVFS). Residues Glu-254 and Glu-256 each coordinate Ca(2+). A D-xylotriose-binding site is contributed by Thr-271. Residue Arg-276 participates in Ca(2+) binding. Repeat 1 spans residues 279–340 (GYIENGNTVT…SSTGSWNTYQ (62 aa)). A 2 X 61 AA approximate repeats region spans residues 279 to 477 (GYIENGNTVT…GSTGSFDTYR (199 aa)). D-xylotriose contacts are provided by Tyr-280, Asn-337, and Asn-364. The D-xylobiose site is built by Tyr-280, Asn-337, and Asn-364. Residues Asp-366, Gln-391, Glu-393, and Ser-413 each coordinate Ca(2+). Copy 2 of the repeat occupies 416-477 (GYIENGYSTT…GSTGSFDTYR (62 aa)). D-xylotriose contacts are provided by Tyr-417, Asp-474, and Asn-501. Position 503 (Asp-503) interacts with Ca(2+).

The protein belongs to the glycosyl hydrolase 11 (cellulase G) family.

It catalyses the reaction Endohydrolysis of (1-&gt;4)-beta-D-xylosidic linkages in xylans.. It participates in glycan degradation; xylan degradation. In Thermoclostridium stercorarium (Clostridium stercorarium), this protein is Endo-1,4-beta-xylanase A (xynA).